The following is a 321-amino-acid chain: WD repeat-containing protein VIP3 (321 aa).

WD repeat units lie at residues 12-55 (AHED…LVRT), 58-97 (GHSL…TIAV), 100-140 (APPS…LIST), 156-195 (SSKK…LLHQ), 198-238 (GHNM…LLGS), 241-280 (GHTS…AIQT), and 283-319 (NHND…SLYD).

As to quaternary structure, component of the nuclear PAF1 complex (PAF1C), which consists of VIP2/ELF7/PAF1, VIP3/SKI8/WDR61, VIP4/LEO1, VIP5/RTF1, VIP6/ELF8/CTR9 and CDC73. Component of the cytoplasmic SKI complex, which consists of SKI2, SKI3 and VIP3/SKI8. Interacts with VIP4 and VIP6.

The protein resides in the nucleus. Its subcellular location is the cytoplasm. Functionally, component of the PAF1 complex (PAF1C) which is involved in histone modifications such as methylation on histone H3 'Lys-4' (H3K4me3). Involved in regulation of flowering time. Required for the expression of the flowering repressor and MADS box gene FLC. Required for histone H3 trimethylation on 'Lys-4' (H3K4me3) and histone dimethylation on 'Lys-36' (H3K36me2) at the FLC locus. Prevents trimethylation on 'Lys-27' (H3K27me3) at the same locus. Not required for meiotic recombination or progression. Component of the SKI complex which is thought to be involved in exosome-mediated RNA decay and associates with transcriptionally active genes in a manner dependent on PAF1 complex (PAF1C). Required for proper progression of cell differentiation process. The sequence is that of WD repeat-containing protein VIP3 from Arabidopsis thaliana (Mouse-ear cress).